The sequence spans 71 residues: MVPPVQVSPLIKFGRYSALILGMAYGAKRYSYLKPRAEEERRIAAEEKKRLDELKRIERELAEAEDVSIFK.

The residue at position 34 (lysine 34) is an N6-acetyllysine. Position 68 is a phosphoserine (serine 68).

The protein belongs to the ATPase e subunit family. As to quaternary structure, component of the ATP synthase complex composed at least of ATP5F1A/subunit alpha, ATP5F1B/subunit beta, ATP5MC1/subunit c (homooctomer), MT-ATP6/subunit a, MT-ATP8/subunit 8, ATP5ME/subunit e, ATP5MF/subunit f, ATP5MG/subunit g, ATP5MK/subunit k, ATP5MJ/subunit j, ATP5F1C/subunit gamma, ATP5F1D/subunit delta, ATP5F1E/subunit epsilon, ATP5PF/subunit F6, ATP5PB/subunit b, ATP5PD/subunit d, ATP5PO/subunit OSCP. ATP synthase complex consists of a soluble F(1) head domain (subunits alpha(3) and beta(3)) - the catalytic core - and a membrane F(0) domain - the membrane proton channel (subunits c, a, 8, e, f, g, k and j). These two domains are linked by a central stalk (subunits gamma, delta, and epsilon) rotating inside the F1 region and a stationary peripheral stalk (subunits F6, b, d, and OSCP).

It is found in the mitochondrion. The protein resides in the mitochondrion inner membrane. Functionally, subunit e, of the mitochondrial membrane ATP synthase complex (F(1)F(0) ATP synthase or Complex V) that produces ATP from ADP in the presence of a proton gradient across the membrane which is generated by electron transport complexes of the respiratory chain. ATP synthase complex consist of a soluble F(1) head domain - the catalytic core - and a membrane F(1) domain - the membrane proton channel. These two domains are linked by a central stalk rotating inside the F(1) region and a stationary peripheral stalk. During catalysis, ATP synthesis in the catalytic domain of F(1) is coupled via a rotary mechanism of the central stalk subunits to proton translocation. In vivo, can only synthesize ATP although its ATP hydrolase activity can be activated artificially in vitro. Part of the complex F(0) domain. This is ATP synthase F(0) complex subunit e, mitochondrial from Rattus norvegicus (Rat).